Consider the following 534-residue polypeptide: C-22 sterol desaturase ERG5B (534 aa).

The helical transmembrane segment at 43–61 (IAVTIFAVLIAYDQFMYIW) threads the bilayer. Residue Cys-480 participates in heme binding.

Belongs to the cytochrome P450 family. Heme is required as a cofactor.

It localises to the endoplasmic reticulum membrane. The catalysed reaction is 5-dehydroepisterol + NADPH + O2 + H(+) = ergosta-5,7,22,24(28)-tetraen-3beta-ol + NADP(+) + 2 H2O. The protein operates within steroid metabolism; ergosterol biosynthesis. Its function is as follows. C-22 sterol desaturase; part of the third module of ergosterol biosynthesis pathway that includes the late steps of the pathway. ERG5A and ERG5B convert 5-dehydroepisterol into ergosta-5,7,22,24(28)-tetraen-3beta-ol by forming the C-22(23) double bond in the sterol side chain. The third module or late pathway involves the ergosterol synthesis itself through consecutive reactions that mainly occur in the endoplasmic reticulum (ER) membrane. Firstly, the squalene synthase ERG9 catalyzes the condensation of 2 farnesyl pyrophosphate moieties to form squalene, which is the precursor of all steroids. Squalene synthase is crucial for balancing the incorporation of farnesyl diphosphate (FPP) into sterol and nonsterol isoprene synthesis. Secondly, squalene is converted into lanosterol by the consecutive action of the squalene epoxidase ERG1 and the lanosterol synthase ERG7. Then, the delta(24)-sterol C-methyltransferase ERG6 methylates lanosterol at C-24 to produce eburicol. Eburicol is the substrate of the sterol 14-alpha demethylase encoded by CYP51A, CYP51B and CYP51C, to yield 4,4,24-trimethyl ergosta-8,14,24(28)-trienol. CYP51B encodes the enzyme primarily responsible for sterol 14-alpha-demethylation, and plays an essential role in ascospore formation. CYP51A encodes an additional sterol 14-alpha-demethylase, induced on ergosterol depletion and responsible for the intrinsic variation in azole sensitivity. The third CYP51 isoform, CYP51C, does not encode a sterol 14-alpha-demethylase, but is required for full virulence on host wheat ears. The C-14 reductase ERG24 then reduces the C14=C15 double bond which leads to 4,4-dimethylfecosterol. A sequence of further demethylations at C-4, involving the C-4 demethylation complex containing the C-4 methylsterol oxidases ERG25, the sterol-4-alpha-carboxylate 3-dehydrogenase ERG26 and the 3-keto-steroid reductase ERG27, leads to the production of fecosterol via 4-methylfecosterol. ERG28 has a role as a scaffold to help anchor ERG25, ERG26 and ERG27 to the endoplasmic reticulum. The C-8 sterol isomerase ERG2 then catalyzes the reaction which results in unsaturation at C-7 in the B ring of sterols and thus converts fecosterol to episterol. The sterol-C5-desaturases ERG3A and ERG3BB then catalyze the introduction of a C-5 double bond in the B ring to produce 5-dehydroepisterol. The C-22 sterol desaturases ERG5A and ERG5B further convert 5-dehydroepisterol into ergosta-5,7,22,24(28)-tetraen-3beta-ol by forming the C-22(23) double bond in the sterol side chain. Finally, ergosta-5,7,22,24(28)-tetraen-3beta-ol is substrate of the C-24(28) sterol reductase ERG4 to produce ergosterol. This chain is C-22 sterol desaturase ERG5B, found in Gibberella zeae (strain ATCC MYA-4620 / CBS 123657 / FGSC 9075 / NRRL 31084 / PH-1) (Wheat head blight fungus).